We begin with the raw amino-acid sequence, 158 residues long: Transcription antitermination protein NusB (158 aa).

Residues 1–13 (MSEAGDTSPQPGK) show a composition bias toward polar residues. The interval 1–24 (MSEAGDTSPQPGKTGQPKAGDRRR) is disordered.

It belongs to the NusB family.

Involved in transcription antitermination. Required for transcription of ribosomal RNA (rRNA) genes. Binds specifically to the boxA antiterminator sequence of the ribosomal RNA (rrn) operons. The chain is Transcription antitermination protein NusB from Marinobacter nauticus (strain ATCC 700491 / DSM 11845 / VT8) (Marinobacter aquaeolei).